Reading from the N-terminus, the 308-residue chain is HPr kinase/phosphorylase (308 aa).

Active-site residues include histidine 138 and lysine 159. ATP is bound at residue 153–160; the sequence is GESGLGKS. Residue serine 160 coordinates Mg(2+). Residue aspartate 177 is the Proton acceptor; for phosphorylation activity. Proton donor; for dephosphorylation activity of the active site. Residues 201–210 form an important for the catalytic mechanism of both phosphorylation and dephosphorylation region; it reads LEVRGLGLLD. Glutamate 202 serves as a coordination point for Mg(2+). Arginine 243 is a catalytic residue. The segment at 264-269 is important for the catalytic mechanism of dephosphorylation; the sequence is QVAAGR.

It belongs to the HPrK/P family. As to quaternary structure, homohexamer. Requires Mg(2+) as cofactor.

It catalyses the reaction [HPr protein]-L-serine + ATP = [HPr protein]-O-phospho-L-serine + ADP + H(+). The enzyme catalyses [HPr protein]-O-phospho-L-serine + phosphate + H(+) = [HPr protein]-L-serine + diphosphate. Its function is as follows. Catalyzes the ATP- as well as the pyrophosphate-dependent phosphorylation of a specific serine residue in HPr, a phosphocarrier protein of the phosphoenolpyruvate-dependent sugar phosphotransferase system (PTS). HprK/P also catalyzes the pyrophosphate-producing, inorganic phosphate-dependent dephosphorylation (phosphorolysis) of seryl-phosphorylated HPr (P-Ser-HPr). The chain is HPr kinase/phosphorylase from Bordetella bronchiseptica (strain ATCC BAA-588 / NCTC 13252 / RB50) (Alcaligenes bronchisepticus).